Reading from the N-terminus, the 328-residue chain is MQQVISHSLPRRHNNILQVFKSYYQLTKPRIILLLLITTAAGMWLGAKGEVSLFLLFVTLTGGALASGAANAINCIYDSDIDYIMERTRWRPIPSGRVKPRDALIFALTLAATSFTLLTVFANLLAALLAMSGIVFYVGVYTHWLKRHSVQNIVIGGAAGAIPPLVGWAAVTGELSWAAWLLFAIIVVWTPPHFWALAIYIRDEYQEVGVPMLPVIEGNEETARQIWVYTLILIPMTLLLVYPLHVSGAIYAVLATYLGVIFIKKAWQLLKDPSNKDVARSLFKYSIYYMMLLCLVMVIDSLPFTHGITTALADSWQTFIGGAIAILF.

8 consecutive transmembrane segments (helical) span residues 31–51, 53–73, 120–140, 153–173, 181–201, 226–246, 250–270, and 285–305; these read IILL…KGEV, LFLL…ANAI, VFAN…YVGV, IVIG…AVTG, LLFA…AIYI, IWVY…PLHV, IYAV…WQLL, and YSIY…LPFT.

It belongs to the UbiA prenyltransferase family. Protoheme IX farnesyltransferase subfamily.

It is found in the cell inner membrane. The enzyme catalyses heme b + (2E,6E)-farnesyl diphosphate + H2O = Fe(II)-heme o + diphosphate. The protein operates within porphyrin-containing compound metabolism; heme O biosynthesis; heme O from protoheme: step 1/1. In terms of biological role, converts heme B (protoheme IX) to heme O by substitution of the vinyl group on carbon 2 of heme B porphyrin ring with a hydroxyethyl farnesyl side group. The chain is Protoheme IX farnesyltransferase from Trichodesmium erythraeum (strain IMS101).